Reading from the N-terminus, the 186-residue chain is Ribosome-recycling factor (186 aa).

The protein belongs to the RRF family.

The protein resides in the cytoplasm. Its function is as follows. Responsible for the release of ribosomes from messenger RNA at the termination of protein biosynthesis. May increase the efficiency of translation by recycling ribosomes from one round of translation to another. In Bacteroides fragilis (strain ATCC 25285 / DSM 2151 / CCUG 4856 / JCM 11019 / LMG 10263 / NCTC 9343 / Onslow / VPI 2553 / EN-2), this protein is Ribosome-recycling factor.